Reading from the N-terminus, the 94-residue chain is Small polypeptide ROTUNDIFOLIA LIKE 1 (94 aa).

Residues methionine 1 to arginine 13 show a composition bias toward polar residues. A disordered region spans residues methionine 1–arginine 26. The segment at arginine 28–lysine 59 is required for DVL/RTFL small polypeptide activity. The chain crosses the membrane as a helical span at residues isoleucine 63 to methionine 82.

The protein belongs to the DVL/RTFL small polypeptides family.

It is found in the cell membrane. Functionally, small polypeptide acting as a regulatory molecule which coordinates cellular responses required for differentiation, growth and development, probably by restricting polar cell proliferation in lateral organs. The sequence is that of Small polypeptide ROTUNDIFOLIA LIKE 1 from Oryza sativa subsp. japonica (Rice).